Reading from the N-terminus, the 1269-residue chain is Rho GTPase-activating protein 29 (1269 aa).

Ser-171, Ser-176, Ser-179, and Ser-190 each carry phosphoserine. Residues 192-462 form the F-BAR domain; sequence IELDSMLLKN…SAKLYDPGQE (271 aa). The stretch at 296–418 forms a coiled coil; it reads RKNEMEKQRK…EILTQLRKLV (123 aa). Disordered stretches follow at residues 472–523 and 540–599; these read SAEE…NSAD and DSES…NSLG. Ser-499, Ser-519, and Ser-552 each carry phosphoserine. The segment covering 540-559 has biased composition (low complexity); the sequence is DSESTGGSSESRSLDSESIS. The Phorbol-ester/DAG-type zinc finger occupies 612-657; sequence THKFRKLRSPTKCRDCEGIVVFHGVECEECLLVCHRKCLENLVIIC. The Rho-GAP domain occupies 671–886; the sequence is AEFTQVAKKE…FLITYSQKIF (216 aa). The tract at residues 909–936 is disordered; the sequence is PGYLPKSLLSPEERDPERSMKSLFFSSK. Phosphoserine is present on Ser-918. The segment covering 919–928 has biased composition (basic and acidic residues); the sequence is PEERDPERSM. Phosphoserine is present on residues Ser-954 and Ser-1026. Positions 1120-1269 are disordered; it reads RSSGDHPVSI…DLEDEIPQFV (150 aa). Residues 1128 to 1145 show a composition bias toward polar residues; that stretch reads SITQPSKPYTEPVRSTRQ. Phosphoserine is present on residues Ser-1152 and Ser-1154. The segment covering 1162-1172 has biased composition (polar residues); that stretch reads TPRTLQPQHWT. A compositionally biased stretch (basic and acidic residues) spans 1229-1241; the sequence is SRPEEKAEERDQP. The segment covering 1259–1269 has biased composition (acidic residues); it reads EDLEDEIPQFV. The tract at residues 1266–1269 is interaction with PTPN13/PTPL1; the sequence is PQFV.

In terms of assembly, interacts with PTPN13/PTPL1. Interacts with RAP2A via its coiled coil domain. Interacts with RASIP1.

GTPase activator for the Rho-type GTPases by converting them to an inactive GDP-bound state. Has strong activity toward RHOA, and weaker activity toward RAC1 and CDC42. May act as a specific effector of RAP2A to regulate Rho. In concert with RASIP1, suppresses RhoA signaling and dampens ROCK and MYH9 activities in endothelial cells and plays an essential role in blood vessel tubulogenesis. In Bos taurus (Bovine), this protein is Rho GTPase-activating protein 29 (ARHGAP29).